We begin with the raw amino-acid sequence, 189 residues long: Cancer/testis antigen family 45 member A3 (189 aa).

Positions K81–Q119 are disordered.

This sequence belongs to the CT45 family. Testis specific. Expressed in cancer cell lines.

The protein localises to the nucleus. The protein is Cancer/testis antigen family 45 member A3 of Homo sapiens (Human).